A 712-amino-acid polypeptide reads, in one-letter code: Autophagy-related protein 13 (712 aa).

2 disordered regions span residues Ala-388 to Pro-443 and Gly-568 to Glu-611. Low complexity predominate over residues Ser-402–Gly-415. The tract at residues Ser-412–His-420 is ATG17-binding. The segment covering Arg-424–Asn-439 has biased composition (basic and acidic residues). Residues Thr-441–Asp-500 form an ATG1-binding region. Residues Thr-576 to Asp-585 are compositionally biased toward acidic residues.

Belongs to the ATG13 family. Fungi subfamily. In terms of assembly, hypophosphorylated form interacts with ATG1 to form the ATG1-ATG13 kinase complex. The ATG1-ATG13 complex interacts with the ATG17-ATG29-ATG31 complex through direct interaction with ATG17. Interacts with VAC8. In terms of processing, hyperphosphorylated under nutrient-rich conditions. Starvation and TOR inactivation results in ATG13 partial dephosphorylation leading to ATG1-binding. Dephosphorylation induces ATG17-binding.

It localises to the cytoplasm. Its subcellular location is the preautophagosomal structure. Functionally, activates the ATG1 kinase in a nutritional condition dependent manner through the TOR pathway, leading to autophagy. Involved in ATG9 and ATG23 cycling through the pre-autophagosomal structure. Also involved in cytoplasm to vacuole transport (Cvt) and more specifically in Cvt vesicle formation. Seems to play a role in the switching machinery regulating the conversion between the Cvt pathway and autophagy. Finally, ATG13 is also required for glycogen storage during stationary phase. This is Autophagy-related protein 13 from Kluyveromyces marxianus (strain DMKU3-1042 / BCC 29191 / NBRC 104275) (Yeast).